The primary structure comprises 73 residues: Conotoxin Vc6.17 (73 aa).

Residues 1–19 (MQKLIILLLVAAVLMSTQA) form the signal peptide. Positions 20-44 (LFQEKRRKEKIDLLSKRKTDAEKQH) are excised as a propeptide. Intrachain disulfides connect cysteine 48–cysteine 62, cysteine 55–cysteine 66, and cysteine 61–cysteine 71.

This sequence belongs to the conotoxin O2 superfamily. In terms of tissue distribution, expressed by the venom duct.

The protein resides in the secreted. Functionally, inhibits voltage-gated ion channels. This Conus victoriae (Queen Victoria cone) protein is Conotoxin Vc6.17.